The following is a 98-amino-acid chain: NADH-ubiquinone oxidoreductase chain 4L (98 aa).

3 helical membrane passes run 1–21, 28–48, and 59–79; these read MMSI…GVLI, STLL…ALII, and APLI…ALLV.

The protein belongs to the complex I subunit 4L family. In terms of assembly, core subunit of respiratory chain NADH dehydrogenase (Complex I) which is composed of 45 different subunits.

It localises to the mitochondrion inner membrane. The catalysed reaction is a ubiquinone + NADH + 5 H(+)(in) = a ubiquinol + NAD(+) + 4 H(+)(out). Its function is as follows. Core subunit of the mitochondrial membrane respiratory chain NADH dehydrogenase (Complex I) which catalyzes electron transfer from NADH through the respiratory chain, using ubiquinone as an electron acceptor. Part of the enzyme membrane arm which is embedded in the lipid bilayer and involved in proton translocation. This Lagostrophus fasciatus (Banded hare-wallaby) protein is NADH-ubiquinone oxidoreductase chain 4L (MT-ND4L).